A 693-amino-acid polypeptide reads, in one-letter code: Histone-lysine N-methyltransferase, H3 lysine-9 specific SUVH7 (693 aa).

2 disordered regions span residues 64 to 99 and 111 to 175; these read WYDGDAGPSSTGPIKREASDNTNDTAHNTFAPPPEM and DSSN…AETE. Positions 129-141 form a DNA-binding region, a.T hook; that stretch reads KRGRGRPKGSKNS. The 147-residue stretch at 227–373 folds into the YDG domain; the sequence is GAVPGIHVGD…FKEFRFKLVR (147 aa). Positions 454–516 constitute a Pre-SET domain; the sequence is QSLGCQNCRH…HCPTRLVQTG (63 aa). 9 residues coordinate Zn(2+): Cys458, Cys461, Cys466, Cys471, Cys473, Cys498, Cys502, Cys504, and Cys508. The SET domain maps to 519–660; sequence LHLEVFKTRN…PMTELTYDYG (142 aa). S-adenosyl-L-methionine-binding positions include 529-531, Asp562, Tyr564, Arg614, and 617-618; these read CGW and NH. 4 residues coordinate Zn(2+): Cys620, Cys681, Cys683, and Cys688. The region spanning 677-693 is the Post-SET domain; the sequence is GKKTCLCGSVKCRGSFT.

The protein belongs to the class V-like SAM-binding methyltransferase superfamily. Histone-lysine methyltransferase family. Suvar3-9 subfamily.

The protein localises to the nucleus. It localises to the chromosome. It is found in the centromere. It catalyses the reaction N(6)-methyl-L-lysyl(9)-[histone H3] + S-adenosyl-L-methionine = N(6),N(6)-dimethyl-L-lysyl(9)-[histone H3] + S-adenosyl-L-homocysteine + H(+). The catalysed reaction is L-lysyl(9)-[histone H3] + S-adenosyl-L-methionine = N(6)-methyl-L-lysyl(9)-[histone H3] + S-adenosyl-L-homocysteine + H(+). Functionally, histone methyltransferase. Methylates 'Lys-9' of histone H3. H3 'Lys-9' methylation represents a specific tag for epigenetic transcriptional repression. This chain is Histone-lysine N-methyltransferase, H3 lysine-9 specific SUVH7 (SUVH7), found in Arabidopsis thaliana (Mouse-ear cress).